The chain runs to 316 residues: Zinc finger protein 367 (316 aa).

The segment at 61–97 (VTLGPGSGSGAASPTRTSSSPAEADPLSCPEHLKDGI) is disordered. Low complexity predominate over residues 70-82 (GAASPTRTSSSPA). 2 consecutive C2H2-type zinc fingers follow at residues 121–143 (IRCN…KRTH) and 149–173 (YLCD…QRLH). The disordered stretch occupies residues 234–294 (QTREQRSPVP…GGVVTARRRL (61 aa)). Acidic residues predominate over residues 255–278 (EDQEQQDPLDFLPSDEGEEEEQEE). The stretch at 289-313 (TARRRLQEQRERLHGALALIELANN) forms a coiled coil.

The protein belongs to the krueppel C2H2-type zinc-finger protein family.

The protein localises to the nucleus. Functionally, transcriptional activator. This Danio rerio (Zebrafish) protein is Zinc finger protein 367 (znf367).